The chain runs to 344 residues: Selenide, water dikinase (344 aa).

Residue Sec16 is part of the active site. A non-standard amino acid (selenocysteine) is located at residue Sec16. ATP is bound by residues Lys19 and 46–48; that span reads TND. Asp49 lines the Mg(2+) pocket. ATP-binding positions include Asp66, Asp89, and 135–137; that span reads GHT. Asp89 serves as a coordination point for Mg(2+). Position 223 (Asp223) interacts with Mg(2+).

The protein belongs to the selenophosphate synthase 1 family. Class I subfamily. As to quaternary structure, homodimer. The cofactor is Mg(2+).

It carries out the reaction hydrogenselenide + ATP + H2O = selenophosphate + AMP + phosphate + 2 H(+). Its function is as follows. Synthesizes selenophosphate from selenide and ATP. This is Selenide, water dikinase from Caldanaerobacter subterraneus subsp. tengcongensis (strain DSM 15242 / JCM 11007 / NBRC 100824 / MB4) (Thermoanaerobacter tengcongensis).